Consider the following 305-residue polypeptide: tRNA dimethylallyltransferase (305 aa).

14 to 21 (GPTTSGKT) contributes to the ATP binding site. 16–21 (TTSGKT) contributes to the substrate binding site. Interaction with substrate tRNA stretches follow at residues 39–42 (DSAL), 163–167 (QRITR), and 243–248 (RCVGYR).

It belongs to the IPP transferase family. Monomer. Requires Mg(2+) as cofactor.

It carries out the reaction adenosine(37) in tRNA + dimethylallyl diphosphate = N(6)-dimethylallyladenosine(37) in tRNA + diphosphate. Catalyzes the transfer of a dimethylallyl group onto the adenine at position 37 in tRNAs that read codons beginning with uridine, leading to the formation of N6-(dimethylallyl)adenosine (i(6)A). In Ruthia magnifica subsp. Calyptogena magnifica, this protein is tRNA dimethylallyltransferase.